A 387-amino-acid polypeptide reads, in one-letter code: Sorting nexin-7 (387 aa).

In terms of domain architecture, PX spans 30-151; that stretch reads KDLFITVDAP…VFLTAQAEEL (122 aa). Positions 73, 75, 103, and 117 each coordinate a 1,2-diacyl-sn-glycero-3-phospho-(1D-myo-inositol-3-phosphate). One can recognise a BAR domain in the interval 178 to 387; that stretch reads GVKNRPEEFM…PSEEDSEEKL (210 aa).

This sequence belongs to the sorting nexin family. As to quaternary structure, heterodimer; heterodimerizes with SNX4.

It localises to the early endosome membrane. Functionally, involved in the regulation of endocytosis and in several stages of intracellular trafficking. Together with SNX4, involved in autophagosome assembly by regulating trafficking and recycling of phospholipid scramblase ATG9A. The sequence is that of Sorting nexin-7 from Mus musculus (Mouse).